A 366-amino-acid polypeptide reads, in one-letter code: Carboxy-cis,cis-muconate cyclase (366 aa).

Active-site residues include H149, R197, E213, and R275.

It belongs to the cycloisomerase 2 family. As to quaternary structure, homotetramer.

It carries out the reaction 3-carboxy-2,5-dihydro-5-oxofuran-2-acetate = 3-carboxy-cis,cis-muconate. It functions in the pathway aromatic compound metabolism; beta-ketoadipate pathway; 3-carboxy-cis,cis-muconate from 3-carboxy-2,5-dihydro-5-oxofuran-2-acetate: step 1/1. Its function is as follows. Catalyzes a syn cycloisomerization. Also possesses mle activity. The protein is Carboxy-cis,cis-muconate cyclase of Neurospora crassa (strain ATCC 24698 / 74-OR23-1A / CBS 708.71 / DSM 1257 / FGSC 987).